A 533-amino-acid polypeptide reads, in one-letter code: Glucans biosynthesis protein D (533 aa).

The segment at residues 1–28 (MQRRHFLKNAAAALAALGLPALPPWALA) is a signal peptide (tat-type signal).

This sequence belongs to the OpgD/OpgG family. Post-translationally, predicted to be exported by the Tat system. The position of the signal peptide cleavage has not been experimentally proven.

The protein resides in the periplasm. The protein operates within glycan metabolism; osmoregulated periplasmic glucan (OPG) biosynthesis. In terms of biological role, probably involved in the control of the structural glucose backbone of osmoregulated periplasmic glucans (OPGs). The sequence is that of Glucans biosynthesis protein D from Xanthomonas campestris pv. campestris (strain 8004).